A 428-amino-acid chain; its full sequence is ATP-dependent RNA helicase RhlB (428 aa).

The Q motif signature appears at Lys-9–Ala-37. Residues Leu-40–Ile-219 enclose the Helicase ATP-binding domain. Ala-53–Thr-60 is an ATP binding site. Residues Asp-165 to Asp-168 carry the DEAD box motif. In terms of domain architecture, Helicase C-terminal spans Arg-245–Leu-390. Residues Asp-392–Gly-428 form a disordered region. Positions Pro-396 to Leu-413 are enriched in basic residues.

Belongs to the DEAD box helicase family. RhlB subfamily. In terms of assembly, component of the RNA degradosome, which is a multiprotein complex involved in RNA processing and mRNA degradation.

The protein localises to the cytoplasm. The enzyme catalyses ATP + H2O = ADP + phosphate + H(+). Its function is as follows. DEAD-box RNA helicase involved in RNA degradation. Has RNA-dependent ATPase activity and unwinds double-stranded RNA. This is ATP-dependent RNA helicase RhlB from Photorhabdus laumondii subsp. laumondii (strain DSM 15139 / CIP 105565 / TT01) (Photorhabdus luminescens subsp. laumondii).